The sequence spans 219 residues: Large ribosomal subunit protein uL3 (219 aa).

Belongs to the universal ribosomal protein uL3 family. Part of the 50S ribosomal subunit. Forms a cluster with proteins L14 and L19.

One of the primary rRNA binding proteins, it binds directly near the 3'-end of the 23S rRNA, where it nucleates assembly of the 50S subunit. The polypeptide is Large ribosomal subunit protein uL3 (Chlamydia pneumoniae (Chlamydophila pneumoniae)).